A 122-amino-acid chain; its full sequence is Large ribosomal subunit protein uL14 (122 aa).

This sequence belongs to the universal ribosomal protein uL14 family. Part of the 50S ribosomal subunit. Forms a cluster with proteins L3 and L19. In the 70S ribosome, L14 and L19 interact and together make contacts with the 16S rRNA in bridges B5 and B8.

Functionally, binds to 23S rRNA. Forms part of two intersubunit bridges in the 70S ribosome. This chain is Large ribosomal subunit protein uL14, found in Corynebacterium efficiens (strain DSM 44549 / YS-314 / AJ 12310 / JCM 11189 / NBRC 100395).